A 396-amino-acid chain; its full sequence is NADH-quinone oxidoreductase subunit D (396 aa).

This sequence belongs to the complex I 49 kDa subunit family. NDH-1 is composed of 14 different subunits. Subunits NuoB, C, D, E, F, and G constitute the peripheral sector of the complex.

The protein localises to the cell inner membrane. It catalyses the reaction a quinone + NADH + 5 H(+)(in) = a quinol + NAD(+) + 4 H(+)(out). Its function is as follows. NDH-1 shuttles electrons from NADH, via FMN and iron-sulfur (Fe-S) centers, to quinones in the respiratory chain. The immediate electron acceptor for the enzyme in this species is believed to be ubiquinone. Couples the redox reaction to proton translocation (for every two electrons transferred, four hydrogen ions are translocated across the cytoplasmic membrane), and thus conserves the redox energy in a proton gradient. The polypeptide is NADH-quinone oxidoreductase subunit D (Orientia tsutsugamushi (strain Ikeda) (Rickettsia tsutsugamushi)).